Reading from the N-terminus, the 160-residue chain is Cytochrome b6-f complex subunit 4 (160 aa).

3 consecutive transmembrane segments (helical) span residues 36-56 (LLYV…ALAV), 95-115 (LLGV…PFIE), and 131-151 (TVFL…ALPL).

It belongs to the cytochrome b family. PetD subfamily. In terms of assembly, the 4 large subunits of the cytochrome b6-f complex are cytochrome b6, subunit IV (17 kDa polypeptide, PetD), cytochrome f and the Rieske protein, while the 4 small subunits are PetG, PetL, PetM and PetN. The complex functions as a dimer.

It localises to the cellular thylakoid membrane. Functionally, component of the cytochrome b6-f complex, which mediates electron transfer between photosystem II (PSII) and photosystem I (PSI), cyclic electron flow around PSI, and state transitions. This is Cytochrome b6-f complex subunit 4 from Nostoc punctiforme (strain ATCC 29133 / PCC 73102).